Consider the following 220-residue polypeptide: Late transcription elongation factor OPG087 (220 aa).

Belongs to the orthopoxvirus OPG087 family. As to quaternary structure, interacts with H5 and A18. Might be part of a transcription complex composed at least of OPG087, OPG145, and OPG110.

Involved in postreplicative transcription elongation on intermediate and late genes. In Homo sapiens (Human), this protein is Late transcription elongation factor OPG087 (OPG087).